Here is a 159-residue protein sequence, read N- to C-terminus: MKKVIYPGTFDPITNGHLDIITRAANMFDQIIIGVAASPSKKTLFSLEERVKLVEESTAHLSNVSTAGFSGLLVDFAREQEANVLVRGLRTTVDFEYEFGLTSMYRKLLPGVESVFLTPAEEYAFLSSTIVREVAIHGGDVEQFVPKCVYTAIKTKVAK.

T9 provides a ligand contact to substrate. Residues 9-10 (TF) and H17 contribute to the ATP site. K41, L73, and R87 together coordinate substrate. ATP contacts are provided by residues 88 to 90 (GLR), E98, and 123 to 129 (YAFLSST).

It belongs to the bacterial CoaD family. As to quaternary structure, homohexamer. It depends on Mg(2+) as a cofactor.

Its subcellular location is the cytoplasm. The enzyme catalyses (R)-4'-phosphopantetheine + ATP + H(+) = 3'-dephospho-CoA + diphosphate. Its pathway is cofactor biosynthesis; coenzyme A biosynthesis; CoA from (R)-pantothenate: step 4/5. Reversibly transfers an adenylyl group from ATP to 4'-phosphopantetheine, yielding dephospho-CoA (dPCoA) and pyrophosphate. This chain is Phosphopantetheine adenylyltransferase, found in Vibrio campbellii (strain ATCC BAA-1116).